Reading from the N-terminus, the 146-residue chain is Hemoglobin subunit beta (146 aa).

Positions 2–146 (HWTAEEKQLI…VAHALARKYH (145 aa)) constitute a Globin domain. Residues histidine 63 and histidine 92 each contribute to the heme b site.

This sequence belongs to the globin family. Heterotetramer of two alpha chains and two beta chains. In terms of tissue distribution, red blood cells.

In terms of biological role, involved in oxygen transport from the lung to the various peripheral tissues. The chain is Hemoglobin subunit beta (HBB) from Anas platyrhynchos platyrhynchos (Northern mallard).